A 122-amino-acid chain; its full sequence is Large ribosomal subunit protein uL14c (122 aa).

The protein belongs to the universal ribosomal protein uL14 family. Part of the 50S ribosomal subunit.

The protein resides in the plastid. It localises to the chloroplast. Its function is as follows. Binds to 23S rRNA. This Gnetum parvifolium (Small-leaved jointfir) protein is Large ribosomal subunit protein uL14c.